Consider the following 323-residue polypeptide: Cell division protein ZipA (323 aa).

At 1–4 (MDLN) the chain is on the periplasmic side. The helical transmembrane segment at 5–25 (TILIILGIIALIILVVHGLWA) threads the bilayer. Over 26–323 (NRREKSQYFK…AEKAYLDKVR (298 aa)) the chain is Cytoplasmic. The tract at residues 44–73 (SRLREPPAHIQSASEEKKDANTSTPTAEVS) is disordered.

It belongs to the ZipA family. As to quaternary structure, interacts with FtsZ via their C-terminal domains.

It localises to the cell inner membrane. Functionally, essential cell division protein that stabilizes the FtsZ protofilaments by cross-linking them and that serves as a cytoplasmic membrane anchor for the Z ring. Also required for the recruitment to the septal ring of downstream cell division proteins. This chain is Cell division protein ZipA, found in Pasteurella multocida (strain Pm70).